A 382-amino-acid chain; its full sequence is UDP-N-acetylglucosamine--N-acetylmuramyl-(pentapeptide) pyrophosphoryl-undecaprenol N-acetylglucosamine transferase (382 aa).

Residues 22–24 (TGG), N134, R186, S212, 285–290 (ALTVAE), and Q311 contribute to the UDP-N-acetyl-alpha-D-glucosamine site.

Belongs to the glycosyltransferase 28 family. MurG subfamily.

The protein localises to the cell inner membrane. It carries out the reaction di-trans,octa-cis-undecaprenyl diphospho-N-acetyl-alpha-D-muramoyl-L-alanyl-D-glutamyl-meso-2,6-diaminopimeloyl-D-alanyl-D-alanine + UDP-N-acetyl-alpha-D-glucosamine = di-trans,octa-cis-undecaprenyl diphospho-[N-acetyl-alpha-D-glucosaminyl-(1-&gt;4)]-N-acetyl-alpha-D-muramoyl-L-alanyl-D-glutamyl-meso-2,6-diaminopimeloyl-D-alanyl-D-alanine + UDP + H(+). Its pathway is cell wall biogenesis; peptidoglycan biosynthesis. Functionally, cell wall formation. Catalyzes the transfer of a GlcNAc subunit on undecaprenyl-pyrophosphoryl-MurNAc-pentapeptide (lipid intermediate I) to form undecaprenyl-pyrophosphoryl-MurNAc-(pentapeptide)GlcNAc (lipid intermediate II). The sequence is that of UDP-N-acetylglucosamine--N-acetylmuramyl-(pentapeptide) pyrophosphoryl-undecaprenol N-acetylglucosamine transferase from Pseudoalteromonas atlantica (strain T6c / ATCC BAA-1087).